The following is a 547-amino-acid chain: Inositol 1,4,5-trisphosphate receptor-interacting protein-like 1 (547 aa).

The signal sequence occupies residues 1 to 22 (MAVISLMFLAVMYVVHHPLMVS). The Extracellular segment spans residues 23-96 (DRMDLDTLAR…PFQAGGQDGG (74 aa)). A coiled-coil region spans residues 28 to 66 (DTLARSRQLEKRMSEEMRQLEMEFEERSRAAEQKQKVEN). The chain crosses the membrane as a helical span at residues 97 to 117 (PLGWILGNLWNAGLFCLFLIF). Residues 118 to 547 (ELLRQSMQHE…LPCSPVAGGL (430 aa)) lie on the Cytoplasmic side of the membrane.

The protein belongs to the ITPRIP family.

It is found in the cell membrane. In terms of biological role, functions as a ligand of CD3E, inhibiting TCR-CD3 complex signaling to regulate T cell activation. Induces stable CD3E-NCK1 binding, thereby preventing the CD3E-ZAP70 interaction and subsequently inhibiting the activation of the downstream ERK-NFkB signaling cascade and calcium influx. The chain is Inositol 1,4,5-trisphosphate receptor-interacting protein-like 1 (Itpripl1) from Mus musculus (Mouse).